A 686-amino-acid polypeptide reads, in one-letter code: ATP-dependent zinc metalloprotease FTSH 1, chloroplastic (686 aa).

A chloroplast-targeting transit peptide spans M1–T16. The chain crosses the membrane as a helical span at residues F173–L193. G272 to T279 is an ATP binding site. H494 is a binding site for Zn(2+). E495 is an active-site residue. The Zn(2+) site is built by H498 and D575.

This sequence in the N-terminal section; belongs to the AAA ATPase family. It in the C-terminal section; belongs to the peptidase M41 family. The cofactor is Zn(2+).

The protein localises to the plastid. The protein resides in the chloroplast thylakoid membrane. In terms of biological role, probable ATP-dependent zinc metallopeptidase. In Oryza sativa subsp. japonica (Rice), this protein is ATP-dependent zinc metalloprotease FTSH 1, chloroplastic (FTSH1).